The sequence spans 335 residues: MCAKKLKYAAGDDFVRYATPKEAMEETRREFEKEKQRQQQIKVTQAQTPNTRVHSAPIPLQTQYNKNRAENGHHSYGSPQSYSPRHTKTPVDPRYNVIAQKPAGRPIPPAPTHYNNLNTSAQRIASSPPPLIHNQAVPAQLLKKVAPASFDSREDVRDMQVATQLFHNHDVKGKNRLTAEELQNLLQNDDNSHFCISSVDALINLFGASRFGTVNQAEFIALYKRVKSWRKVYVDNDINGSLTISVSEFHNSLQELGYLIPFEVSEKTFDQYAEFINRNGTGKELKFDKFVEALVWLMRLTKLFRKFDTNQEGIATIQYKDFIDATLYLGRFLPH.

The span at 23 to 37 (AMEETRREFEKEKQR) shows a compositional bias: basic and acidic residues. The interval 23 to 92 (AMEETRREFE…SPRHTKTPVD (70 aa)) is disordered. Over residues 43–53 (VTQAQTPNTRV) the composition is skewed to polar residues. EF-hand domains are found at residues 144-192 (KVAP…DDNS), 198-223 (SVDALINLFGASRFGTVNQAEFIALY), 224-259 (KRVKSWRKVYVDNDINGSLTISVSEFHNSLQELGYL), 260-300 (IPFE…LMRL), and 301-332 (TKLFRKFDTNQEGIATIQYKDFIDATLYLGRF). The Ca(2+) site is built by aspartate 170, arginine 176, and glutamate 181. Ca(2+) is bound by residues aspartate 237, asparagine 239, serine 241, threonine 243, and glutamate 248.

In terms of assembly, homodimer.

It localises to the cytoplasm. Its subcellular location is the nucleus. The protein resides in the bud tip. It is found in the bud neck. Calcium-binding protein that is required for polar bud growth and cell wall abscission. Can also bind zinc ions. This is Peflin (PEF1) from Saccharomyces cerevisiae (strain ATCC 204508 / S288c) (Baker's yeast).